The primary structure comprises 488 residues: DELTA-alicitoxin-Pse2b (488 aa).

Residues 1 to 21 (MSKPIIFLLTAFVVLTDLGAT) form the signal peptide. Positions 24 to 344 (TEKVEVKAKP…GYLNFDCAYE (321 aa)) constitute an MACPF domain. The region spanning 369 to 398 (VCKLGPEGCHSDDDCESDDLIYCACCGDSC) is the EGF-like domain. Cystine bridges form between Cys370/Cys383, Cys377/Cys391, and Cys393/Cys398.

It is found in the secreted. It localises to the nematocyst. Causes lethal toxicity to the shrimp Palaemon paucidence, and hemolytic activity toward sheep red blood cells. The chain is DELTA-alicitoxin-Pse2b from Phyllodiscus semoni (Night anemone).